Reading from the N-terminus, the 485-residue chain is N-succinylglutamate 5-semialdehyde dehydrogenase (485 aa).

Gly-220–Gly-225 is a binding site for NAD(+). Residues Glu-243 and Cys-278 contribute to the active site.

The protein belongs to the aldehyde dehydrogenase family. AstD subfamily.

The catalysed reaction is N-succinyl-L-glutamate 5-semialdehyde + NAD(+) + H2O = N-succinyl-L-glutamate + NADH + 2 H(+). The protein operates within amino-acid degradation; L-arginine degradation via AST pathway; L-glutamate and succinate from L-arginine: step 4/5. Functionally, catalyzes the NAD-dependent reduction of succinylglutamate semialdehyde into succinylglutamate. This is N-succinylglutamate 5-semialdehyde dehydrogenase from Vibrio cholerae serotype O1 (strain ATCC 39541 / Classical Ogawa 395 / O395).